A 106-amino-acid polypeptide reads, in one-letter code: ATP-dependent Clp protease adapter protein ClpS (106 aa).

Positions 1-13 (MPRNTSHEHDHGL) are enriched in basic and acidic residues. The segment at 1–20 (MPRNTSHEHDHGLMVEASKP) is disordered.

Belongs to the ClpS family. As to quaternary structure, binds to the N-terminal domain of the chaperone ClpA.

In terms of biological role, involved in the modulation of the specificity of the ClpAP-mediated ATP-dependent protein degradation. The polypeptide is ATP-dependent Clp protease adapter protein ClpS (Xanthomonas axonopodis pv. citri (strain 306)).